Consider the following 738-residue polypeptide: Dipeptidyl peptidase 3 (738 aa).

Position 2 is an N-acetylalanine (alanine 2). Position 450 (histidine 450) interacts with Zn(2+). Glutamate 451 is a catalytic residue. Zn(2+)-binding residues include histidine 455 and glutamate 508.

It belongs to the peptidase M49 family. Zn(2+) is required as a cofactor.

The protein localises to the cytoplasm. It catalyses the reaction Release of an N-terminal dipeptide from a peptide comprising four or more residues, with broad specificity. Also acts on dipeptidyl 2-naphthylamides.. Inhibited by spinorphin, an opioid peptide derived from hemoglobin. Cleaves and degrades bioactive peptides, including angiotensin, Leu-enkephalin and Met-enkephalin. Also cleaves Arg-Arg-beta-naphthylamide. This is Dipeptidyl peptidase 3 (Dpp3) from Rattus norvegicus (Rat).